The following is a 335-amino-acid chain: Malate dehydrogenase 1 (335 aa).

NAD(+)-binding positions include 11–16 (GAGNVG) and Asp-35. 2 residues coordinate substrate: Arg-97 and Arg-103. Residues Asn-110 and 133–135 (VTN) contribute to the NAD(+) site. Positions 135 and 166 each coordinate substrate. The active-site Proton acceptor is the His-190.

The protein belongs to the LDH/MDH superfamily. MDH type 3 family.

It carries out the reaction (S)-malate + NAD(+) = oxaloacetate + NADH + H(+). Catalyzes the reversible oxidation of malate to oxaloacetate. The polypeptide is Malate dehydrogenase 1 (mdh1) (Aquifex aeolicus (strain VF5)).